Here is a 302-residue protein sequence, read N- to C-terminus: 4-hydroxy-tetrahydrodipicolinate synthase (302 aa).

T46 is a pyruvate binding site. The active-site Proton donor/acceptor is Y135. K164 functions as the Schiff-base intermediate with substrate in the catalytic mechanism. V206 is a pyruvate binding site.

It belongs to the DapA family. Homotetramer; dimer of dimers.

Its subcellular location is the cytoplasm. It catalyses the reaction L-aspartate 4-semialdehyde + pyruvate = (2S,4S)-4-hydroxy-2,3,4,5-tetrahydrodipicolinate + H2O + H(+). The protein operates within amino-acid biosynthesis; L-lysine biosynthesis via DAP pathway; (S)-tetrahydrodipicolinate from L-aspartate: step 3/4. Its function is as follows. Catalyzes the condensation of (S)-aspartate-beta-semialdehyde [(S)-ASA] and pyruvate to 4-hydroxy-tetrahydrodipicolinate (HTPA). The protein is 4-hydroxy-tetrahydrodipicolinate synthase of Acidobacterium capsulatum (strain ATCC 51196 / DSM 11244 / BCRC 80197 / JCM 7670 / NBRC 15755 / NCIMB 13165 / 161).